The sequence spans 24 residues: SM-11044-binding protein (24 aa).

Functionally, may mediate relaxation of depolarized colon tonus. It binds iodocyanopindolol and SM-11044. In Rattus norvegicus (Rat), this protein is SM-11044-binding protein.